Consider the following 331-residue polypeptide: Holliday junction branch migration complex subunit RuvB (331 aa).

Positions 1 to 186 (MAKTMMQDRL…FGIVQRLEFY (186 aa)) are large ATPase domain (RuvB-L). ATP is bound by residues I25, R26, G67, K70, T71, T72, 133–135 (EDF), R176, Y186, and R223. Residue T71 participates in Mg(2+) binding. The segment at 187–257 (NIADLTTIVS…IAGSALDMLA (71 aa)) is small ATPAse domain (RuvB-S). Positions 260–331 (RRGLDHLDRR…LTQMAIDQMV (72 aa)) are head domain (RuvB-H). The DNA site is built by R296, R315, and R320.

This sequence belongs to the RuvB family. As to quaternary structure, homohexamer. Forms an RuvA(8)-RuvB(12)-Holliday junction (HJ) complex. HJ DNA is sandwiched between 2 RuvA tetramers; dsDNA enters through RuvA and exits via RuvB. An RuvB hexamer assembles on each DNA strand where it exits the tetramer. Each RuvB hexamer is contacted by two RuvA subunits (via domain III) on 2 adjacent RuvB subunits; this complex drives branch migration. In the full resolvosome a probable DNA-RuvA(4)-RuvB(12)-RuvC(2) complex forms which resolves the HJ.

It is found in the cytoplasm. The enzyme catalyses ATP + H2O = ADP + phosphate + H(+). The RuvA-RuvB-RuvC complex processes Holliday junction (HJ) DNA during genetic recombination and DNA repair, while the RuvA-RuvB complex plays an important role in the rescue of blocked DNA replication forks via replication fork reversal (RFR). RuvA specifically binds to HJ cruciform DNA, conferring on it an open structure. The RuvB hexamer acts as an ATP-dependent pump, pulling dsDNA into and through the RuvAB complex. RuvB forms 2 homohexamers on either side of HJ DNA bound by 1 or 2 RuvA tetramers; 4 subunits per hexamer contact DNA at a time. Coordinated motions by a converter formed by DNA-disengaged RuvB subunits stimulates ATP hydrolysis and nucleotide exchange. Immobilization of the converter enables RuvB to convert the ATP-contained energy into a lever motion, pulling 2 nucleotides of DNA out of the RuvA tetramer per ATP hydrolyzed, thus driving DNA branch migration. The RuvB motors rotate together with the DNA substrate, which together with the progressing nucleotide cycle form the mechanistic basis for DNA recombination by continuous HJ branch migration. Branch migration allows RuvC to scan DNA until it finds its consensus sequence, where it cleaves and resolves cruciform DNA. The sequence is that of Holliday junction branch migration complex subunit RuvB from Psychrobacter arcticus (strain DSM 17307 / VKM B-2377 / 273-4).